We begin with the raw amino-acid sequence, 101 residues long: MHCDIYRSSKKDEMYIYIARPNYPDETEQADPFEKVPEAVLQAFGRATFVMHLELAPTRKLARVNVLHVLDSLQTKGFFIQMPPEGLINPNAVEPEGLRGA.

Residues 1–92 (MHCDIYRSSK…PPEGLINPNA (92 aa)) enclose the YcgL domain.

The protein is YcgL domain-containing protein ABBFA_001807 of Acinetobacter baumannii (strain AB307-0294).